Reading from the N-terminus, the 424-residue chain is MQRDEQIFDLIQEEKDRQIHGLELIASENFVSDEVMEAAGSVLTNKYAEGYPGKRYYGGCEVVDVIEQIAIDRAKELFGAEYANVQPHSGSQANTAVYHACLNPGDTILGFDLSHGGHLTHGSPVNFSGRLYRPVFYGVDAETGRLDYDKIQEIATKEQPKLIIAGASAYSRDMDFARFRQIADSVGAILFADISHPAGLIAKGLLSDPIPHCHIVSTTTHKTLRGPRGGLILMGKDFPNPQGLTTPKGEIRMMSSLLDLAVFPGNQGGPLMHIIAAKAVAFGEALKDEFFTYAMQLQKNANAMADAFVKRGYNIISGGTDNHMMLIDLRNKNISGKEAENALVKAEITVNKNMVPFDDKSPFITSGIRVGTAAITTRGLVEKDMETIVALIDKVLTNHTNEDVIEEVAEEVNELMSERPIFAY.

Residues leucine 113 and 117-119 (GHL) contribute to the (6S)-5,6,7,8-tetrahydrofolate site. Lysine 222 bears the N6-(pyridoxal phosphate)lysine mark. 361-363 (SPF) serves as a coordination point for (6S)-5,6,7,8-tetrahydrofolate.

The protein belongs to the SHMT family. Homodimer. Pyridoxal 5'-phosphate serves as cofactor.

The protein localises to the cytoplasm. The enzyme catalyses (6R)-5,10-methylene-5,6,7,8-tetrahydrofolate + glycine + H2O = (6S)-5,6,7,8-tetrahydrofolate + L-serine. The protein operates within one-carbon metabolism; tetrahydrofolate interconversion. Its pathway is amino-acid biosynthesis; glycine biosynthesis; glycine from L-serine: step 1/1. Its function is as follows. Catalyzes the reversible interconversion of serine and glycine with tetrahydrofolate (THF) serving as the one-carbon carrier. This reaction serves as the major source of one-carbon groups required for the biosynthesis of purines, thymidylate, methionine, and other important biomolecules. Also exhibits THF-independent aldolase activity toward beta-hydroxyamino acids, producing glycine and aldehydes, via a retro-aldol mechanism. The sequence is that of Serine hydroxymethyltransferase from Flavobacterium johnsoniae (strain ATCC 17061 / DSM 2064 / JCM 8514 / BCRC 14874 / CCUG 350202 / NBRC 14942 / NCIMB 11054 / UW101) (Cytophaga johnsonae).